We begin with the raw amino-acid sequence, 186 residues long: Ribosome-recycling factor (186 aa).

Belongs to the RRF family.

The protein resides in the cytoplasm. In terms of biological role, responsible for the release of ribosomes from messenger RNA at the termination of protein biosynthesis. May increase the efficiency of translation by recycling ribosomes from one round of translation to another. This is Ribosome-recycling factor from Porphyromonas gingivalis (strain ATCC BAA-308 / W83).